A 211-amino-acid polypeptide reads, in one-letter code: Protein YCF54, chloroplastic (211 aa).

Residues 1–80 (MWSVTGALTV…GESTKYHFLV (80 aa)) constitute a chloroplast transit peptide.

Belongs to the ycf54 family. Interacts with LFNR1 and CRD1/CHL27 in chloroplasts.

The protein localises to the plastid. It localises to the chloroplast. Involved in the biosynthesis of chlorophyll; acts probably as a scaffolding factor in the MgProto monomethylester (MgProtoME) cyclase complex to stabilize CRD1/CHL27, the catalytic subunit which catalyzes the formation of a fifth isocyclic ring to tetrapyrroles to form protochlorophyllide. The protein is Protein YCF54, chloroplastic of Arabidopsis thaliana (Mouse-ear cress).